A 551-amino-acid chain; its full sequence is RCC1 and BTB domain-containing protein 2 (551 aa).

RCC1 repeat units lie at residues 64 to 115 (NDEI…VLAT), 117 to 169 (EGEV…VLTS), 171 to 222 (GEVF…AVVD), 223 to 274 (TGEV…VLTD), 276 to 326 (GQVY…AAKT), and 328 to 382 (GGHV…TVAE). The BTB domain maps to 394-457 (ADLKFLVDGK…LYTDSISLSP (64 aa)).

The protein resides in the cytoplasmic vesicle. Its subcellular location is the secretory vesicle. It is found in the acrosome. This is RCC1 and BTB domain-containing protein 2 (RCBTB2) from Homo sapiens (Human).